The primary structure comprises 57 residues: Large ribosomal subunit protein uL30 (57 aa).

The protein belongs to the universal ribosomal protein uL30 family. As to quaternary structure, part of the 50S ribosomal subunit.

This Buchnera aphidicola subsp. Cinara cedri (strain Cc) protein is Large ribosomal subunit protein uL30.